A 520-amino-acid polypeptide reads, in one-letter code: UDP-N-acetylmuramoyl-L-alanyl-D-glutamate--2,6-diaminopimelate ligase (520 aa).

UDP-N-acetyl-alpha-D-muramoyl-L-alanyl-D-glutamate is bound at residue Leu-48. Gly-134 to Thr-140 contributes to the ATP binding site. UDP-N-acetyl-alpha-D-muramoyl-L-alanyl-D-glutamate contacts are provided by residues Thr-176 to Thr-177, Ser-203, and Arg-211. Lys-243 carries the post-translational modification N6-carboxylysine. Meso-2,6-diaminopimelate contacts are provided by residues Arg-405, Asp-429–Arg-432, Gly-483, and Glu-487. Residues Asp-429–Arg-432 carry the Meso-diaminopimelate recognition motif motif.

This sequence belongs to the MurCDEF family. MurE subfamily. Mg(2+) is required as a cofactor. In terms of processing, carboxylation is probably crucial for Mg(2+) binding and, consequently, for the gamma-phosphate positioning of ATP.

The protein resides in the cytoplasm. It carries out the reaction UDP-N-acetyl-alpha-D-muramoyl-L-alanyl-D-glutamate + meso-2,6-diaminopimelate + ATP = UDP-N-acetyl-alpha-D-muramoyl-L-alanyl-gamma-D-glutamyl-meso-2,6-diaminopimelate + ADP + phosphate + H(+). Its pathway is cell wall biogenesis; peptidoglycan biosynthesis. Functionally, catalyzes the addition of meso-diaminopimelic acid to the nucleotide precursor UDP-N-acetylmuramoyl-L-alanyl-D-glutamate (UMAG) in the biosynthesis of bacterial cell-wall peptidoglycan. This chain is UDP-N-acetylmuramoyl-L-alanyl-D-glutamate--2,6-diaminopimelate ligase, found in Mycolicibacterium paratuberculosis (strain ATCC BAA-968 / K-10) (Mycobacterium paratuberculosis).